Here is a 252-residue protein sequence, read N- to C-terminus: 5'-nucleotidase SurE (252 aa).

Residues aspartate 8, aspartate 9, serine 40, and asparagine 93 each coordinate a divalent metal cation.

Belongs to the SurE nucleotidase family. It depends on a divalent metal cation as a cofactor.

It is found in the cytoplasm. The enzyme catalyses a ribonucleoside 5'-phosphate + H2O = a ribonucleoside + phosphate. In terms of biological role, nucleotidase that shows phosphatase activity on nucleoside 5'-monophosphates. The protein is 5'-nucleotidase SurE of Methylocella silvestris (strain DSM 15510 / CIP 108128 / LMG 27833 / NCIMB 13906 / BL2).